Here is a 125-residue protein sequence, read N- to C-terminus: UPF0734 protein DDB_G0273871/DDB_G0273177 (125 aa).

Belongs to the UPF0734 family.

In Dictyostelium discoideum (Social amoeba), this protein is UPF0734 protein DDB_G0273871/DDB_G0273177.